The primary structure comprises 235 residues: MTIKAQPTLHTARLELVPLGHEHREFTMKLDMDPEVMKMVAFGRPFTEDEAIQVHTWLMNCATSVPGFGTWVGFAEGEFVGWWVLAPVPTTENPKSFRTDRTEYGFRVSPKFWGQGYAKEGAREMVRYAFEELGLAEVIGETMTINMASRAVMAGCGLTHVETFFNKYDTPPPGIEEGEVRYSITREEWLRMQKPSMTRSRWFPAFASWLPRLLLSRLWSYIFQGRRLAAGAASP.

The N-acetyltransferase domain occupies 14 to 190; the sequence is LELVPLGHEH…RYSITREEWL (177 aa). CoA contacts are provided by residues 106-108, Gly-114, Asn-146, and 151-153; these read FRV and AVM.

It participates in siderophore biosynthesis. Functionally, fsC-acetyl coenzyme A-N(2)-transacetylase; part of the siderophore biosynthetic pathway. Aspergillus fumigatus produces 4 types of siderophores, low-molecular-mass iron chelators, including excreted fusarinine C (FsC) and triacetylfusarinine C (TAFC) for iron uptake and intacellular ferricrocin (FC) for hyphal and hydroxyferricrocin (HFC) for conidial iron distribution and storage. TAFC consists of 3 N(2)-acetyl-N(5)-anhydromevalonyl-N(5)-hydroxyornithine residues cyclically linked by ester bonds; FC is a cyclic hexapeptide with the structure Gly-Ser-Gly-(N(5)-acetyl-N(5)-hydroxyornithine)x3. The biosynthesis of all four siderophores depends on the hydroxylation of ornithine, catalyzed by the monooxygenase sidA. Subsequently, the pathways for biosynthesis of extra- and intracellular siderophores split. For biosynthesis of extracellular siderophores, the transacylase sidF transfers anhydromevalonyl to N(5)-hydroxyornithine. The required anhydromevalonyl-CoA moiety is derived from mevalonate by CoA ligation and dehydration catalyzed by sidI and sidH respectively. The acetylation of N(5)-hydroxyornithine for FC biosynthesis involves the constitutively expressed sidL. FC is hydroxylated to HFC by an as yet uncharacterized enzyme during conidiation. Assembly of fusarinine C (FsC) and FC is catalyzed by two different nonribosomal peptide synthetases (NRPS), sidD and sidC respectively. Subsequently, sidG catalyzes N2-acetylation of FsC for forming TAFC. Both extra- and intracellular siderophores are crucial for growth during iron limitation and virulence. This is FsC-acetyl coenzyme A-N(2)-transacetylase from Aspergillus fumigatus (strain ATCC MYA-4609 / CBS 101355 / FGSC A1100 / Af293) (Neosartorya fumigata).